A 295-amino-acid chain; its full sequence is Indole-3-glycerol phosphate synthase (295 aa).

Belongs to the TrpC family.

It carries out the reaction 1-(2-carboxyphenylamino)-1-deoxy-D-ribulose 5-phosphate + H(+) = (1S,2R)-1-C-(indol-3-yl)glycerol 3-phosphate + CO2 + H2O. It functions in the pathway amino-acid biosynthesis; L-tryptophan biosynthesis; L-tryptophan from chorismate: step 4/5. The sequence is that of Indole-3-glycerol phosphate synthase from Prochlorococcus marinus (strain MIT 9211).